Consider the following 183-residue polypeptide: Streptavidin-V2 (183 aa).

The N-terminal stretch at Met1–Ala24 is a signal peptide. An Avidin-like domain is found at Ala37 to Pro159. Residues Tyr67 and Tyr78 each contribute to the biotin site. Residues Arg83–Asp85 carry the Cell attachment site; atypical motif. Biotin contacts are provided by Trp116, Trp132, and Trp144.

Belongs to the avidin/streptavidin family. In terms of assembly, homotetramer.

It is found in the secreted. The biological function of streptavidin is not known. Forms a strong non-covalent specific complex with biotin (one molecule of biotin per subunit of streptavidin). This is Streptavidin-V2 from Streptomyces violaceus (Streptomyces venezuelae).